The following is a 114-amino-acid chain: T cell receptor alpha variable 3 (114 aa).

An N-terminal signal peptide occupies residues 1-20; sequence MASAPISMLAMLFTLSGLRA. An Ig-like domain is found at 21-114; it reads QSVAQPEDQV…SALYFCAVRD (94 aa). Cys42 and Cys110 are joined by a disulfide. Asn87 carries an N-linked (GlcNAc...) asparagine glycan.

Alpha-beta TR is a heterodimer composed of an alpha and beta chain; disulfide-linked. The alpha-beta TR is associated with the transmembrane signaling CD3 coreceptor proteins to form the TR-CD3 (TcR or TCR). The assembly of alpha-beta TR heterodimers with CD3 occurs in the endoplasmic reticulum where a single alpha-beta TR heterodimer associates with one CD3D-CD3E heterodimer, one CD3G-CD3E heterodimer and one CD247 homodimer forming a stable octameric structure. CD3D-CD3E and CD3G-CD3E heterodimers preferentially associate with TR alpha and TR beta chains, respectively. The association of the CD247 homodimer is the last step of TcR assembly in the endoplasmic reticulum and is required for transport to the cell surface.

The protein resides in the cell membrane. V region of the variable domain of T cell receptor (TR) alpha chain that participates in the antigen recognition. Alpha-beta T cell receptors are antigen specific receptors which are essential to the immune response and are present on the cell surface of T lymphocytes. Recognize peptide-major histocompatibility (MH) (pMH) complexes that are displayed by antigen presenting cells (APC), a prerequisite for efficient T cell adaptive immunity against pathogens. Binding of alpha-beta TR to pMH complex initiates TR-CD3 clustering on the cell surface and intracellular activation of LCK that phosphorylates the ITAM motifs of CD3G, CD3D, CD3E and CD247 enabling the recruitment of ZAP70. In turn ZAP70 phosphorylates LAT, which recruits numerous signaling molecules to form the LAT signalosome. The LAT signalosome propagates signal branching to three major signaling pathways, the calcium, the mitogen-activated protein kinase (MAPK) kinase and the nuclear factor NF-kappa-B (NF-kB) pathways, leading to the mobilization of transcription factors that are critical for gene expression and essential for T cell growth and differentiation. The T cell repertoire is generated in the thymus, by V-(D)-J rearrangement. This repertoire is then shaped by intrathymic selection events to generate a peripheral T cell pool of self-MH restricted, non-autoaggressive T cells. Post-thymic interaction of alpha-beta TR with the pMH complexes shapes TR structural and functional avidity. The sequence is that of T cell receptor alpha variable 3 from Homo sapiens (Human).